We begin with the raw amino-acid sequence, 214 residues long: Probable transaldolase (214 aa).

Residue K83 is the Schiff-base intermediate with substrate of the active site.

This sequence belongs to the transaldolase family. Type 3B subfamily.

Its subcellular location is the cytoplasm. The enzyme catalyses D-sedoheptulose 7-phosphate + D-glyceraldehyde 3-phosphate = D-erythrose 4-phosphate + beta-D-fructose 6-phosphate. The protein operates within carbohydrate degradation; pentose phosphate pathway; D-glyceraldehyde 3-phosphate and beta-D-fructose 6-phosphate from D-ribose 5-phosphate and D-xylulose 5-phosphate (non-oxidative stage): step 2/3. In terms of biological role, transaldolase is important for the balance of metabolites in the pentose-phosphate pathway. The protein is Probable transaldolase of Dictyoglomus turgidum (strain DSM 6724 / Z-1310).